The sequence spans 564 residues: Homeobox protein unc-62 (564 aa).

5 disordered regions span residues 40-59 (NEQFNDGYGPPPGSASADPA), 216-270 (ERAS…VMGG), 293-313 (SSSSNQAGDHPLANGGTLHST), 328-397 (PSTC…KVPK), and 455-503 (IDQN…PSSL). One can recognise an MEIS N-terminal domain in the interval 133 to 218 (SSDVCSSASF…PLDIVGDERA (86 aa)). Residues 219–230 (SSSQPPMSPGSM) are compositionally biased toward low complexity. Polar residues-rich tracts occupy residues 328–344 (PSTCSSGGLRQDSTPLS) and 381–390 (LSDSANGSQN). Residues 392 to 454 (KRKVPKVFSK…NARRRIVQPM (63 aa)) constitute a DNA-binding region (homeobox; TALE-type). 2 stretches are compositionally biased toward polar residues: residues 455 to 469 (IDQNNRAGRSGQMNV) and 494 to 503 (ANYSPDPSSL).

This sequence belongs to the TALE/MEIS homeobox family. As to quaternary structure, forms a heterodimer with homeobox ceh-60.

The protein resides in the nucleus. In terms of biological role, acts redundantly with ceh-20 and ceh-40 to perform overlapping roles during embryogenesis. Required for postembryonic development of the ectoderm, including the Q, V and P cell lineages, playing a crucial role in ensuring that these cells and their descendants undergo their invariant patterns of cell division, migration, fusion and morphogenesis. Has a role in the mig-13 pathway to promote anterior migration of neuroblasts in the Q lineage. Required for multiple roles in regulating vulva development. Associates with homeobox ceh-60 to regulate gene expression, including repression of genes involved in innate immunity and activation of genes involved in vitellogenesis. Involved in lipid homeostasis, contributing to the formation of the cuticle. This chain is Homeobox protein unc-62 (unc-62), found in Caenorhabditis elegans.